Reading from the N-terminus, the 217-residue chain is Casparian strip membrane protein 6 (217 aa).

The Cytoplasmic segment spans residues 1–57 (MEEAKHIEAVEAKQIEAEEAQRIKAGEAKQIEAGETSRSSRKVITFEPKLVINKGIS). The helical transmembrane segment at 58–78 (VLGFVLRLFAVFGTIGSALAM) threads the bilayer. Residues 79–103 (GTTHESVVSLSQLVLLKVKYSDLPT) lie on the Extracellular side of the membrane. A helical transmembrane segment spans residues 104 to 124 (LMFFVVANAIAGGYLVLSLPV). Over 125–138 (SIFHIFSTKAKTSR) the chain is Cytoplasmic. Residues 139-159 (IILLVIDTVMLALVSSGASAA) traverse the membrane as a helical segment. Over 160 to 191 (TATVYLAHEGNTTANWPPICQQFDGFCERISG) the chain is Extracellular. N-linked (GlcNAc...) asparagine glycosylation occurs at Asn-170. A helical membrane pass occupies residues 192–212 (SLIGSFCAVILLMLIVINSAI). The Cytoplasmic portion of the chain corresponds to 213 to 217 (SLSRH).

The protein belongs to the Casparian strip membrane proteins (CASP) family. As to quaternary structure, homodimer and heterodimers.

The protein resides in the cell membrane. Functionally, regulates membrane-cell wall junctions and localized cell wall deposition. Required for establishment of the Casparian strip membrane domain (CSD) and the subsequent formation of Casparian strips, a cell wall modification of the root endodermis that determines an apoplastic barrier between the intraorganismal apoplasm and the extraorganismal apoplasm and prevents lateral diffusion. This is Casparian strip membrane protein 6 from Arabidopsis lyrata subsp. lyrata (Lyre-leaved rock-cress).